Consider the following 279-residue polypeptide: Large ribosomal subunit protein uL2 (279 aa).

The interval 216 to 279 (KRPSVRGVVM…IQKRKRNRNR (64 aa)) is disordered. The segment covering 270–279 (IQKRKRNRNR) has biased composition (basic residues).

The protein belongs to the universal ribosomal protein uL2 family. Part of the 50S ribosomal subunit. Forms a bridge to the 30S subunit in the 70S ribosome.

One of the primary rRNA binding proteins. Required for association of the 30S and 50S subunits to form the 70S ribosome, for tRNA binding and peptide bond formation. It has been suggested to have peptidyltransferase activity; this is somewhat controversial. Makes several contacts with the 16S rRNA in the 70S ribosome. This chain is Large ribosomal subunit protein uL2, found in Leptospira interrogans serogroup Icterohaemorrhagiae serovar copenhageni (strain Fiocruz L1-130).